The chain runs to 326 residues: Regulation of nuclear pre-mRNA domain-containing protein 1B (326 aa).

Serine 2 bears the N-acetylserine mark. The region spanning 2 to 133 (SSFSESALEK…QLKLSMEDSK (132 aa)) is the CID domain. A disordered region spans residues 127–149 (LSMEDSKSPPPKATEEKKSLKRT). A compositionally biased stretch (basic and acidic residues) spans 128 to 144 (SMEDSKSPPPKATEEKK). Phosphoserine is present on residues serine 132 and serine 134. Tyrosine 161 is modified (phosphotyrosine). Serine 166 and serine 299 each carry phosphoserine.

It belongs to the UPF0400 (RTT103) family. As to quaternary structure, homodimer. May form a heterodimer with RPRD1A. Associates with RPAP2. Associates with the RNA polymerase II complex. As to expression, preferentially expressed in a range of tumor tissues including colon, lung, liver, breast, prostate, stomach, uterine endometrium and cervical cancers with higher levels in tumors than in adjacent non-tumor tissue (at protein level).

Its subcellular location is the nucleus. Interacts with phosphorylated C-terminal heptapeptide repeat domain (CTD) of the largest RNA polymerase II subunit POLR2A, and participates in dephosphorylation of the CTD by RPAP2. Transcriptional regulator which enhances expression of CCND1. Promotes binding of RNA polymerase II to the CCDN1 promoter and to the termination region before the poly-A site but decreases its binding after the poly-A site. Prevents RNA polymerase II from reading through the 3' end termination site and may allow it to be recruited back to the promoter through promotion of the formation of a chromatin loop. Also enhances the transcription of a number of other cell cycle-related genes including CDK2, CDK4, CDK6 and cyclin-E but not CDKN1A, CDKN1B or cyclin-A. Promotes cell proliferation. The polypeptide is Regulation of nuclear pre-mRNA domain-containing protein 1B (RPRD1B) (Homo sapiens (Human)).